The following is a 517-amino-acid chain: General transcription factor IIF subunit 1 (517 aa).

The residue at position 2 (Ala2) is an N-acetylalanine. Thr156 is modified (phosphothreonine). Residues 178 to 466 (QQRRLKDQDQ…DAVRRYLTRK (289 aa)) form a disordered region. 4 positions are modified to phosphoserine: Ser217, Ser218, Ser221, and Ser224. Positions 232 to 251 (PKAKKKAPLAKGGRKKKKKK) are enriched in basic residues. Acidic residues-rich tracts occupy residues 255–270 (DEAF…EGQE) and 303–325 (EQSD…EEEE). The residue at position 331 (Thr331) is a Phosphothreonine. Acidic residues predominate over residues 343–355 (EESDSSEESDIDS). Residues 364–374 (AKKKTPPKRER) are compositionally biased toward basic residues. Phosphoserine is present on residues Ser377, Ser380, Ser381, and Ser385. Over residues 377–391 (SGGSSRGNSRPGTPS) the composition is skewed to low complexity. The residue at position 389 (Thr389) is a Phosphothreonine. Residue Ser391 is modified to Phosphoserine. Lys407 bears the N6-acetyllysine mark. Residues 428–452 (GPQSLSGKSTPQPPSGKTTPNSGDV) are compositionally biased toward polar residues. A phosphoserine mark is found at Ser431, Ser433, and Ser436. Thr437 and Thr446 each carry phosphothreonine. Ser449 bears the Phosphoserine mark. Residues Glu503, His512, and Glu517 each coordinate Zn(2+).

This sequence belongs to the TFIIF alpha subunit family. Heterodimer of an alpha and a beta subunit. Interacts with GTF2F2, CTDP1, TAF6/TAFII80 and URI1. Interacts with GTF2B (via C-terminus and preferentially via acetylated form); this interaction prevents binding of GTF2B to GTF2F2. Part of TBP-based Pol II pre-initiation complex (PIC), in which Pol II core assembles with general transcription factors and other specific initiation factors including GTF2E1, GTF2E2, GTF2F1, GTF2F2, TCEA1, ERCC2, ERCC3, GTF2H2, GTF2H3, GTF2H4, GTF2H5, GTF2A1, GTF2A2, GTF2B and TBP; this large multi-subunit PIC complex mediates DNA unwinding and targets Pol II core to the transcription start site where the first phosphodiester bond forms. In terms of processing, phosphorylated on Ser and other residues by TAF1 and casein kinase II-like kinases.

The protein localises to the nucleus. TFIIF is a general transcription initiation factor that binds to RNA polymerase II and helps to recruit it to the initiation complex in collaboration with TFIIB. It promotes transcription elongation. The sequence is that of General transcription factor IIF subunit 1 (GTF2F1) from Homo sapiens (Human).